Here is a 277-residue protein sequence, read N- to C-terminus: Large ribosomal subunit protein uL2 (277 aa).

The disordered stretch occupies residues 219 to 277; the sequence is RPQTRGSAMNPVDHPHGGGEGKKNSGRHPVTPWGKPTKGAKTRRKKASDKLIISRRKGK. Residues 231 to 241 are compositionally biased toward basic and acidic residues; that stretch reads DHPHGGGEGKK. Over residues 256–277 the composition is skewed to basic residues; sequence KGAKTRRKKASDKLIISRRKGK.

The protein belongs to the universal ribosomal protein uL2 family. Part of the 50S ribosomal subunit. Forms a bridge to the 30S subunit in the 70S ribosome.

One of the primary rRNA binding proteins. Required for association of the 30S and 50S subunits to form the 70S ribosome, for tRNA binding and peptide bond formation. It has been suggested to have peptidyltransferase activity; this is somewhat controversial. Makes several contacts with the 16S rRNA in the 70S ribosome. The protein is Large ribosomal subunit protein uL2 of Campylobacter concisus (strain 13826).